The sequence spans 290 residues: Membrane protein insertase YidC 2 (290 aa).

Residues 1 to 19 (MKKKALLPLFLGIMIFLAG) form the signal peptide. A lipid anchor (N-palmitoyl cysteine) is attached at cysteine 20. A lipid anchor (S-diacylglycerol cysteine) is attached at cysteine 20. Helical transmembrane passes span 56 to 76 (FGLAIIVLVLFIRLILLPFML), 134 to 154 (MLGCLPILIQMPIIMGLYFVL), 176 to 196 (PDIWITVIAGVLYFIQAVVSS), 211 to 231 (MVISPIMIIWISLQASSALGL), and 232 to 252 (YWSVSALFLVIQTHFANIYYS). The tract at residues 266–290 (YEREHNPSSKKKGKNTQVVSKKNKK) is disordered. Residues 280–290 (NTQVVSKKNKK) show a composition bias toward polar residues.

It belongs to the OXA1/ALB3/YidC family. Type 2 subfamily.

The protein localises to the cell membrane. Its function is as follows. Required for the insertion and/or proper folding and/or complex formation of integral membrane proteins into the membrane. Involved in integration of membrane proteins that insert both dependently and independently of the Sec translocase complex, as well as at least some lipoproteins. The polypeptide is Membrane protein insertase YidC 2 (Staphylococcus epidermidis (strain ATCC 35984 / DSM 28319 / BCRC 17069 / CCUG 31568 / BM 3577 / RP62A)).